We begin with the raw amino-acid sequence, 740 residues long: NAD(P)H-quinone oxidoreductase subunit 5, chloroplastic (740 aa).

The next 16 helical transmembrane spans lie at 9–29 (WIIP…LLLI), 39–59 (IWAF…TKLA), 89–109 (IDPL…MVLI), 125–145 (FAYM…PNLI), 147–167 (IHIF…FWFT), 185–205 (GDFG…SFEF), 231–251 (AFLL…HVWL), 259–279 (TPIS…FLVA), 281–301 (LLPL…IGLI), 328–348 (LGYI…FHLI), 355–375 (ALLF…VGYS), 397–417 (TTFF…CFWS), 426–446 (WLYS…TAFY), 548–568 (TMLF…CIGI), 607–627 (FYSV…YGSV), and 719–739 (GRIS…LLLV).

The protein belongs to the complex I subunit 5 family. NDH is composed of at least 16 different subunits, 5 of which are encoded in the nucleus.

The protein localises to the plastid. Its subcellular location is the chloroplast thylakoid membrane. It carries out the reaction a plastoquinone + NADH + (n+1) H(+)(in) = a plastoquinol + NAD(+) + n H(+)(out). It catalyses the reaction a plastoquinone + NADPH + (n+1) H(+)(in) = a plastoquinol + NADP(+) + n H(+)(out). In terms of biological role, NDH shuttles electrons from NAD(P)H:plastoquinone, via FMN and iron-sulfur (Fe-S) centers, to quinones in the photosynthetic chain and possibly in a chloroplast respiratory chain. The immediate electron acceptor for the enzyme in this species is believed to be plastoquinone. Couples the redox reaction to proton translocation, and thus conserves the redox energy in a proton gradient. The protein is NAD(P)H-quinone oxidoreductase subunit 5, chloroplastic (ndhF) of Nuphar advena (Common spatterdock).